Consider the following 476-residue polypeptide: UDP-N-acetylmuramate--L-alanine ligase (476 aa).

107 to 113 (GTHGKTT) provides a ligand contact to ATP.

Belongs to the MurCDEF family.

Its subcellular location is the cytoplasm. It carries out the reaction UDP-N-acetyl-alpha-D-muramate + L-alanine + ATP = UDP-N-acetyl-alpha-D-muramoyl-L-alanine + ADP + phosphate + H(+). The protein operates within cell wall biogenesis; peptidoglycan biosynthesis. Its function is as follows. Cell wall formation. This Roseiflexus castenholzii (strain DSM 13941 / HLO8) protein is UDP-N-acetylmuramate--L-alanine ligase.